The primary structure comprises 533 residues: Monogalactosyldiacylglycerol synthase 1, chloroplastic (533 aa).

Residues His-155 and Pro-189 each coordinate a 1,2-diacyl-sn-glycero-3-phospho-(1'-sn-glycerol). UDP is bound at residue His-155. The tract at residues 192-215 (QLPRSYNFLVKHGTLWKMTYYGTS) is required for binding to diacyl glycerol. Residues Arg-324, Phe-413, Ile-414, 434 to 438 (GTIAE), and Glu-456 contribute to the UDP site.

Belongs to the glycosyltransferase 28 family. In terms of assembly, homodimer. Expressed in roots, stems, leaves, flowers, siliques and seeds.

The protein localises to the plastid. Its subcellular location is the chloroplast inner membrane. It carries out the reaction a 1,2-diacyl-sn-glycerol + UDP-alpha-D-galactose = a 1,2-diacyl-3-O-(beta-D-galactosyl)-sn-glycerol + UDP + H(+). The enzyme catalyses 1,2-di-(9Z,12Z-octadecadienoyl)-sn-glycerol + UDP-alpha-D-galactose = 1,2-di-(9Z,12Z-octadecadienoyl)-3-beta-D-galactosyl-sn-glycerol + UDP + H(+). It catalyses the reaction 1-(9Z-octadecenoyl)-2-hexadecanoyl-sn-glycerol + UDP-alpha-D-galactose = 1-(9Z-octadecenoyl)-2-hexadecanoyl-3-beta-D-galactosyl-sn-glycerol + UDP + H(+). The catalysed reaction is 1,2-di-(9Z-octadecenoyl)-sn-glycerol + UDP-alpha-D-galactose = 1,2-di-(9Z-octadecenoyl)-3-beta-D-galactosyl-sn-glycerol + UDP + H(+). Activated by phosphatidate (PA) and phosphatidylglycerol (PG). Inhibited by galvestine-1. In terms of biological role, involved in the synthesis of the major structural component of photosynthetic membranes. Required for proper thylakoid membrane biogenesis. Does not discriminate between prokaryotic (18:1/16:0) or eukaryotic (18:2/18:2) 1,2-diacylglycerol species, but operates with some preference for the prokaryotic one. Is responsible for most galactolipid synthesis in chloroplasts. Required for the formation of thylakoid membranes and functional photosynthetic electron transport during cotyledons greening in young seedlings. May link galactolipid synthesis with the coordinated transcriptional regulation of chloroplasts and other organelles during cotyledon greening. In Arabidopsis thaliana (Mouse-ear cress), this protein is Monogalactosyldiacylglycerol synthase 1, chloroplastic.